We begin with the raw amino-acid sequence, 89 residues long: uncharacterized protein (89 aa).

To Synechocystis PCC 6803 slr1025.

This is an uncharacterized protein from Ureaplasma parvum serovar 3 (strain ATCC 700970).